A 90-amino-acid polypeptide reads, in one-letter code: Small ribosomal subunit protein bS16 (90 aa).

This sequence belongs to the bacterial ribosomal protein bS16 family.

The protein is Small ribosomal subunit protein bS16 of Streptococcus gordonii (strain Challis / ATCC 35105 / BCRC 15272 / CH1 / DL1 / V288).